Consider the following 226-residue polypeptide: Lipoprotein-releasing system ATP-binding protein LolD (226 aa).

An ABC transporter domain is found at 6–226 (VLISGLTKTF…KLYKGNLEEV (221 aa)). Position 42–49 (42–49 (GESGSGKS)) interacts with ATP.

This sequence belongs to the ABC transporter superfamily. Lipoprotein translocase (TC 3.A.1.125) family. As to quaternary structure, the complex is composed of two ATP-binding proteins (LolD) and two transmembrane proteins (LolC and LolE).

The protein localises to the cell inner membrane. Functionally, part of the ABC transporter complex LolCDE involved in the translocation of mature outer membrane-directed lipoproteins, from the inner membrane to the periplasmic chaperone, LolA. Responsible for the formation of the LolA-lipoprotein complex in an ATP-dependent manner. In Treponema denticola (strain ATCC 35405 / DSM 14222 / CIP 103919 / JCM 8153 / KCTC 15104), this protein is Lipoprotein-releasing system ATP-binding protein LolD.